A 303-amino-acid polypeptide reads, in one-letter code: Glycine--tRNA ligase alpha subunit (303 aa).

The protein belongs to the class-II aminoacyl-tRNA synthetase family. Tetramer of two alpha and two beta subunits.

It is found in the cytoplasm. The enzyme catalyses tRNA(Gly) + glycine + ATP = glycyl-tRNA(Gly) + AMP + diphosphate. This chain is Glycine--tRNA ligase alpha subunit, found in Streptococcus equi subsp. equi (strain 4047).